Consider the following 349-residue polypeptide: MPMPPDDSALSLLPDHPLAAHNTFGIDATARFAARITHAAQFAALHRDPRVAHLPQLVLGGGSNVVFTRDFDGIVLLDEIAGRRVVREDDDAWYVEAGGGETWHAFVAWTLEHGMPGLENLALIPGTVGAAPIQNIGAYGLEMKTYFDSLVAVELATGRSERFDAARCAFGYRDSFFKREGRGRFAIVAVTFRLPKRWTPRLGYADVTRELDARGIAPEAATPRDVFDAVVAIRRAKLPDPLELGNAGSFFKNPVIDAARFDALRARVPDVVSYPQPGGQVKLAAGWLIDRCGWKGRALGAAAVHDRQALVLVNRGGATGADVLALARAIQDDVRKQFGVELEPEPVCV.

Residues 24-197 (FGIDATARFA…VAVTFRLPKR (174 aa)) form the FAD-binding PCMH-type domain. Residue Arg-173 is part of the active site. The active-site Proton donor is Ser-249. The active site involves Glu-345.

This sequence belongs to the MurB family. FAD serves as cofactor.

The protein resides in the cytoplasm. The enzyme catalyses UDP-N-acetyl-alpha-D-muramate + NADP(+) = UDP-N-acetyl-3-O-(1-carboxyvinyl)-alpha-D-glucosamine + NADPH + H(+). Its pathway is cell wall biogenesis; peptidoglycan biosynthesis. Functionally, cell wall formation. This Burkholderia ambifaria (strain ATCC BAA-244 / DSM 16087 / CCUG 44356 / LMG 19182 / AMMD) (Burkholderia cepacia (strain AMMD)) protein is UDP-N-acetylenolpyruvoylglucosamine reductase.